Consider the following 874-residue polypeptide: Probable inorganic carbon transporter subunit DabA (874 aa).

Residues Cys398, Asp400, His580, and Cys595 each contribute to the Zn(2+) site.

It belongs to the inorganic carbon transporter (TC 9.A.2) DabA family. Forms a complex with DabB. The cofactor is Zn(2+).

Its subcellular location is the cell membrane. Functionally, part of an energy-coupled inorganic carbon pump. The sequence is that of Probable inorganic carbon transporter subunit DabA from Bacillus cereus (strain AH820).